The chain runs to 342 residues: Ribosomal RNA small subunit methyltransferase C (342 aa).

This sequence belongs to the methyltransferase superfamily. RsmC family. In terms of assembly, monomer.

The protein localises to the cytoplasm. It catalyses the reaction guanosine(1207) in 16S rRNA + S-adenosyl-L-methionine = N(2)-methylguanosine(1207) in 16S rRNA + S-adenosyl-L-homocysteine + H(+). Specifically methylates the guanine in position 1207 of 16S rRNA in the 30S particle. The sequence is that of Ribosomal RNA small subunit methyltransferase C from Salmonella heidelberg (strain SL476).